The primary structure comprises 608 residues: Protein SHQ1 homolog (608 aa).

Disordered regions lie at residues 487–531 (DAGS…SFYS) and 543–608 (IVYE…ASTT). Residues 489 to 498 (GSQGSSPQQQ) are compositionally biased toward low complexity. Acidic residues-rich tracts occupy residues 502-524 (DDLDLDNDTSGQEDETTTDDESV) and 543-579 (IVYEDDEEDEDDDEDGDDDEDGDGDEDEDEDEDEDDS). Over residues 588 to 608 (EAEGNSVIEQCSNSETAASTT) the composition is skewed to polar residues.

It belongs to the SHQ1 family.

Its function is as follows. Required for the quantitative accumulation of H/ACA ribonucleoproteins (RNPs). The polypeptide is Protein SHQ1 homolog (Drosophila melanogaster (Fruit fly)).